Here is a 61-residue protein sequence, read N- to C-terminus: Small ribosomal subunit protein uS14B (61 aa).

Cys-24, Cys-27, Cys-40, and Cys-43 together coordinate Zn(2+).

Belongs to the universal ribosomal protein uS14 family. Zinc-binding uS14 subfamily. Part of the 30S ribosomal subunit. Contacts proteins S3 and S10. The cofactor is Zn(2+).

Functionally, binds 16S rRNA, required for the assembly of 30S particles and may also be responsible for determining the conformation of the 16S rRNA at the A site. This is Small ribosomal subunit protein uS14B from Oceanobacillus iheyensis (strain DSM 14371 / CIP 107618 / JCM 11309 / KCTC 3954 / HTE831).